Consider the following 218-residue polypeptide: Peptidyl-tRNA hydrolase (218 aa).

Tyr19 lines the tRNA pocket. Catalysis depends on His24, which acts as the Proton acceptor. TRNA-binding residues include Tyr68, Asn70, and Asn116. The interval 181–218 (WNTATQRLNARPAPPKPPKAPKAPQPAAADQPKDESQP) is disordered. Residues 192–204 (PAPPKPPKAPKAP) are compositionally biased toward pro residues.

This sequence belongs to the PTH family. As to quaternary structure, monomer.

It is found in the cytoplasm. It catalyses the reaction an N-acyl-L-alpha-aminoacyl-tRNA + H2O = an N-acyl-L-amino acid + a tRNA + H(+). Hydrolyzes ribosome-free peptidyl-tRNAs (with 1 or more amino acids incorporated), which drop off the ribosome during protein synthesis, or as a result of ribosome stalling. Functionally, catalyzes the release of premature peptidyl moieties from peptidyl-tRNA molecules trapped in stalled 50S ribosomal subunits, and thus maintains levels of free tRNAs and 50S ribosomes. The polypeptide is Peptidyl-tRNA hydrolase (Azoarcus sp. (strain BH72)).